The following is a 172-amino-acid chain: Large ribosomal subunit protein bL17 (172 aa).

The segment covering 140 to 160 (LKAEAKAKREEKKPAKKEEKP) has biased composition (basic and acidic residues). Residues 140–172 (LKAEAKAKREEKKPAKKEEKPKKAKKEKAAASN) are disordered.

It belongs to the bacterial ribosomal protein bL17 family. Part of the 50S ribosomal subunit. Contacts protein L32.

The protein is Large ribosomal subunit protein bL17 of Leptospira biflexa serovar Patoc (strain Patoc 1 / Ames).